The sequence spans 66 residues: Protein I177L (66 aa).

It belongs to the asfivirus I177L family.

It is found in the virion. In African swine fever virus (isolate Tick/Malawi/Lil 20-1/1983) (ASFV), this protein is Protein I177L.